A 20-amino-acid polypeptide reads, in one-letter code: C-reactive protein (20 aa).

A Pentraxin (PTX) domain is found at 1–20 (SPVAASYRATAGLAGKALDF).

This sequence belongs to the pentraxin family. Homodimer; disulfide-linked. It is not known if it assembles into a pentraxin (or pentaxin) structure. Pentraxins have a discoid arrangement of 5 non-covalently bound subunits. Glycosylated.

It is found in the secreted. Functionally, displays several functions associated with host defense: it promotes agglutination, bacterial capsular swelling, phagocytosis, and complement fixation through its calcium-dependent binding to phosphorylcholine. The protein is C-reactive protein of Mustelus canis (Smooth dogfish).